The following is a 372-amino-acid chain: Actin-related protein 2/3 complex subunit 1B (372 aa).

WD repeat units lie at residues 6 to 45 (FLVEPISCHAWNKDRTQIAICPNNHEVHIYEKSGAKWTKV), 50 to 89 (EHNGQVTGIDWAPESNRIVTCGTDRNAYVWTLKGRTWKPT), 94 to 135 (RINR…WVCK), 140 to 179 (PIRSTVLSLDWHPNNVLLAAGSCDFKCRIFSAYIKEVEER), 242 to 280 (SETLPLLALTFITDNSLVAAGHDCFPVLFTYDAAAGMLS), and 324 to 367 (LHKN…SALK).

The protein belongs to the WD repeat ARPC1 family. Component of the Arp2/3 complex composed of ACTR2/ARP2, ACTR3/ARP3, ARPC1B/p41-ARC, ARPC2/p34-ARC, ARPC3/p21-ARC, ARPC4/p20-ARC and ARPC5/p16-ARC.

It localises to the cytoplasm. Its subcellular location is the cytoskeleton. The protein localises to the nucleus. Component of the Arp2/3 complex, a multiprotein complex that mediates actin polymerization upon stimulation by nucleation-promoting factor (NPF). The Arp2/3 complex mediates the formation of branched actin networks in the cytoplasm, providing the force for cell motility. In addition to its role in the cytoplasmic cytoskeleton, the Arp2/3 complex also promotes actin polymerization in the nucleus, thereby regulating gene transcription and repair of damaged DNA. The Arp2/3 complex promotes homologous recombination (HR) repair in response to DNA damage by promoting nuclear actin polymerization, leading to drive motility of double-strand breaks (DSBs). This chain is Actin-related protein 2/3 complex subunit 1B, found in Homo sapiens (Human).